The following is a 305-amino-acid chain: Phosphatidate cytidylyltransferase (305 aa).

8 consecutive transmembrane segments (helical) span residues 27 to 47, 67 to 87, 96 to 116, 124 to 144, 150 to 170, 202 to 222, 232 to 252, and 277 to 297; these read FLVI…VGLL, FPFS…ALTC, FPEH…IRLV, LGPI…SVPI, ILYG…AIFL, TVVG…LFYS, IAVP…GFFG, and MLDV…ILLI.

It belongs to the CDS family.

The protein localises to the cell membrane. The enzyme catalyses a 1,2-diacyl-sn-glycero-3-phosphate + CTP + H(+) = a CDP-1,2-diacyl-sn-glycerol + diphosphate. Its pathway is phospholipid metabolism; CDP-diacylglycerol biosynthesis; CDP-diacylglycerol from sn-glycerol 3-phosphate: step 3/3. The chain is Phosphatidate cytidylyltransferase (cdsA) from Chlamydia trachomatis serovar D (strain ATCC VR-885 / DSM 19411 / UW-3/Cx).